The primary structure comprises 357 residues: Membrane-bound lytic murein transglycosylase C (357 aa).

A signal peptide spans 1–15 (MKKYLLLALLPFLYA). Cys-16 is lipidated: N-palmitoyl cysteine. Cys-16 carries S-diacylglycerol cysteine lipidation.

The protein belongs to the transglycosylase Slt family.

The protein resides in the cell outer membrane. It carries out the reaction Exolytic cleavage of the (1-&gt;4)-beta-glycosidic linkage between N-acetylmuramic acid (MurNAc) and N-acetylglucosamine (GlcNAc) residues in peptidoglycan, from either the reducing or the non-reducing ends of the peptidoglycan chains, with concomitant formation of a 1,6-anhydrobond in the MurNAc residue.. Murein-degrading enzyme. May play a role in recycling of muropeptides during cell elongation and/or cell division. The protein is Membrane-bound lytic murein transglycosylase C of Haemophilus influenzae (strain ATCC 51907 / DSM 11121 / KW20 / Rd).